A 158-amino-acid polypeptide reads, in one-letter code: Large ribosomal subunit protein uL16 (158 aa).

This sequence belongs to the universal ribosomal protein uL16 family. In terms of assembly, part of the 50S ribosomal subunit.

Its function is as follows. Binds 23S rRNA and is also seen to make contacts with the A and possibly P site tRNAs. This is Large ribosomal subunit protein uL16 from Synechococcus sp. (strain CC9902).